The primary structure comprises 273 residues: 2-dehydro-3-deoxyphosphooctonate aldolase (273 aa).

This sequence belongs to the KdsA family.

It localises to the cytoplasm. The enzyme catalyses D-arabinose 5-phosphate + phosphoenolpyruvate + H2O = 3-deoxy-alpha-D-manno-2-octulosonate-8-phosphate + phosphate. Its pathway is carbohydrate biosynthesis; 3-deoxy-D-manno-octulosonate biosynthesis; 3-deoxy-D-manno-octulosonate from D-ribulose 5-phosphate: step 2/3. The protein operates within bacterial outer membrane biogenesis; lipopolysaccharide biosynthesis. This chain is 2-dehydro-3-deoxyphosphooctonate aldolase, found in Geobacter sp. (strain M21).